We begin with the raw amino-acid sequence, 50 residues long: uncharacterized protein (50 aa).

This is an uncharacterized protein from Treponema pallidum (strain Nichols).